Consider the following 157-residue polypeptide: ATP synthase subunit b' (157 aa).

Residues 22–42 form a helical membrane-spanning segment; the sequence is ATLPIIAVQFLLLVAVLNSLF.

The protein belongs to the ATPase B chain family. In terms of assembly, F-type ATPases have 2 components, F(1) - the catalytic core - and F(0) - the membrane proton channel. F(1) has five subunits: alpha(3), beta(3), gamma(1), delta(1), epsilon(1). F(0) has four main subunits: a(1), b(1), b'(1) and c(10-14). The alpha and beta chains form an alternating ring which encloses part of the gamma chain. F(1) is attached to F(0) by a central stalk formed by the gamma and epsilon chains, while a peripheral stalk is formed by the delta, b and b' chains.

It is found in the cellular thylakoid membrane. Its function is as follows. F(1)F(0) ATP synthase produces ATP from ADP in the presence of a proton or sodium gradient. F-type ATPases consist of two structural domains, F(1) containing the extramembraneous catalytic core and F(0) containing the membrane proton channel, linked together by a central stalk and a peripheral stalk. During catalysis, ATP synthesis in the catalytic domain of F(1) is coupled via a rotary mechanism of the central stalk subunits to proton translocation. Functionally, component of the F(0) channel, it forms part of the peripheral stalk, linking F(1) to F(0). The b'-subunit is a diverged and duplicated form of b found in plants and photosynthetic bacteria. This Synechococcus sp. (strain JA-3-3Ab) (Cyanobacteria bacterium Yellowstone A-Prime) protein is ATP synthase subunit b'.